We begin with the raw amino-acid sequence, 384 residues long: Chorismate synthase (384 aa).

2 residues coordinate NADP(+): R40 and R46. FMN is bound by residues 128–130 (RAS), G292, 307–311 (KPIPT), and R333.

The protein belongs to the chorismate synthase family. In terms of assembly, homotetramer. It depends on FMNH2 as a cofactor.

It catalyses the reaction 5-O-(1-carboxyvinyl)-3-phosphoshikimate = chorismate + phosphate. Its pathway is metabolic intermediate biosynthesis; chorismate biosynthesis; chorismate from D-erythrose 4-phosphate and phosphoenolpyruvate: step 7/7. Functionally, catalyzes the anti-1,4-elimination of the C-3 phosphate and the C-6 proR hydrogen from 5-enolpyruvylshikimate-3-phosphate (EPSP) to yield chorismate, which is the branch point compound that serves as the starting substrate for the three terminal pathways of aromatic amino acid biosynthesis. This reaction introduces a second double bond into the aromatic ring system. This Carboxydothermus hydrogenoformans (strain ATCC BAA-161 / DSM 6008 / Z-2901) protein is Chorismate synthase.